A 384-amino-acid polypeptide reads, in one-letter code: Spermidine/putrescine import ATP-binding protein PotA (384 aa).

An ABC transporter domain is found at 6 to 238 (IAFQNVSKVF…PINHFVATFI (233 aa)). 40–47 (GASGSGKS) contributes to the ATP binding site.

The protein belongs to the ABC transporter superfamily. Spermidine/putrescine importer (TC 3.A.1.11.1) family. As to quaternary structure, the complex is composed of two ATP-binding proteins (PotA), two transmembrane proteins (PotB and PotC) and a solute-binding protein (PotD).

Its subcellular location is the cell membrane. It catalyses the reaction ATP + H2O + polyamine-[polyamine-binding protein]Side 1 = ADP + phosphate + polyamineSide 2 + [polyamine-binding protein]Side 1.. In terms of biological role, part of the ABC transporter complex PotABCD involved in spermidine/putrescine import. Responsible for energy coupling to the transport system. The sequence is that of Spermidine/putrescine import ATP-binding protein PotA from Streptococcus thermophilus (strain ATCC BAA-491 / LMD-9).